The following is a 356-amino-acid chain: Galectin-9C (356 aa).

Positions 17–148 constitute a Galectin 1 domain; the sequence is FSGTIQGGLQ…SVQLSYISFQ (132 aa). A beta-D-galactoside is bound at residue 82–88; that stretch reads WGPEERK. The interval 170-190 is disordered; it reads FPPRPRGRRQKPPSVRPANPA. The region spanning 228-356 is the Galectin 2 domain; the sequence is FITTIPGGLY…GDIQLTHVQT (129 aa). An a beta-D-galactoside-binding site is contributed by 288-294; it reads WGSEERS.

Its function is as follows. Binds galactosides. This chain is Galectin-9C (LGALS9C), found in Homo sapiens (Human).